The following is a 350-amino-acid chain: Transmembrane protein 115 (350 aa).

The Cytoplasmic segment spans residues 1–19 (MQRALPGARQHLGAILASA). The segment at 1-205 (MQRALPGARQ…FGLLSSWVYL (205 aa)) is mediates homooligomerization. A helical membrane pass occupies residues 20 to 40 (SVVVKALCAVVLFLYLLSFAV). The Lumenal portion of the chain corresponds to 41–97 (DTGCLAVTPGYLFPPNFWIWTLATHGLMEQHVWDVAISLATVVVAGRLLEPLWGALE). A helical transmembrane segment spans residues 98 to 118 (LLIFFSVVNVSVGLLGALAYL). Residues 119 to 126 (LTYMASFN) are Cytoplasmic-facing. The helical transmembrane segment at 127 to 147 (LVYLFTIRIHGALGFLGGVLV) threads the bilayer. Residues 148 to 165 (ALKQTMGDCVVLRVPQVR) lie on the Lumenal side of the membrane. A helical membrane pass occupies residues 166-186 (VSVVPMLLLALLLLLRLATLL). Over 187–350 (QSPALASYGF…LITLETAPLL (164 aa)) the chain is Cytoplasmic. A mediates localization to the Golgi region spans residues 206–229 (RFYQRHSRGRGDMADHFAFATFFP). Residues 299–350 (EDQSAWPSMDDDEEEAGAKTDSPLPLEEASTPPGKVTVPESSLITLETAPLL) form a disordered region. The residue at position 329 (threonine 329) is a Phosphothreonine.

It belongs to the TMEM115 family. As to quaternary structure, homooligomer. Interacts with COPB1. May interact with LMAN1. Interacts with the COG complex; probably through COG3.

The protein resides in the golgi apparatus. The protein localises to the golgi stack membrane. May play a role in retrograde transport of proteins from the Golgi to the endoplasmic reticulum. May indirectly play a role in protein glycosylation in the Golgi. The sequence is that of Transmembrane protein 115 from Mus musculus (Mouse).